Here is a 160-residue protein sequence, read N- to C-terminus: MQALLFISYGAILGASLRWAIGLLFNPLFSSFAFGTLIANLFGCLIIGVLLGLFWQFPQISAEWRLFLITGFLGSLTTFSSFSSEVVELFFNDKWLNGFCVLMMHLFGCLAMTVLGIWIYKICLNFYLNPIHFGFAQLNQQIHRYEIRVIAYIAKFFVSF.

4 helical membrane passes run 5 to 25 (LFIS…GLLF), 34 to 54 (FGTL…LGLF), 67 to 87 (FLIT…SEVV), and 99 to 119 (FCVL…GIWI). Gly74 and Thr77 together coordinate Na(+).

The protein belongs to the fluoride channel Fluc/FEX (TC 1.A.43) family.

The protein resides in the cell inner membrane. It catalyses the reaction fluoride(in) = fluoride(out). With respect to regulation, na(+) is not transported, but it plays an essential structural role and its presence is essential for fluoride channel function. Functionally, fluoride-specific ion channel. Important for reducing fluoride concentration in the cell, thus reducing its toxicity. The chain is Fluoride-specific ion channel FluC from Haemophilus influenzae (strain ATCC 51907 / DSM 11121 / KW20 / Rd).